The sequence spans 306 residues: Recombination-associated protein RdgC (306 aa).

It belongs to the RdgC family.

It localises to the cytoplasm. Its subcellular location is the nucleoid. May be involved in recombination. The sequence is that of Recombination-associated protein RdgC from Burkholderia ambifaria (strain MC40-6).